The chain runs to 155 residues: Ribosome maturation factor RimP (155 aa).

It belongs to the RimP family.

The protein resides in the cytoplasm. Functionally, required for maturation of 30S ribosomal subunits. This Salinibacter ruber (strain DSM 13855 / M31) protein is Ribosome maturation factor RimP.